The following is a 286-amino-acid chain: Formamidopyrimidine-DNA glycosylase (286 aa).

Catalysis depends on Pro-2, which acts as the Schiff-base intermediate with DNA. Glu-3 (proton donor) is an active-site residue. The Proton donor; for beta-elimination activity role is filled by Lys-60. DNA is bound by residues His-103, Arg-122, and Arg-167. The segment at 252 to 286 (WVYRRNQKPCRKCGTLIEKTKVAGRSTHWCPNCQN) adopts an FPG-type zinc-finger fold. The active-site Proton donor; for delta-elimination activity is the Arg-276.

It belongs to the FPG family. In terms of assembly, monomer. Zn(2+) serves as cofactor.

It carries out the reaction Hydrolysis of DNA containing ring-opened 7-methylguanine residues, releasing 2,6-diamino-4-hydroxy-5-(N-methyl)formamidopyrimidine.. It catalyses the reaction 2'-deoxyribonucleotide-(2'-deoxyribose 5'-phosphate)-2'-deoxyribonucleotide-DNA = a 3'-end 2'-deoxyribonucleotide-(2,3-dehydro-2,3-deoxyribose 5'-phosphate)-DNA + a 5'-end 5'-phospho-2'-deoxyribonucleoside-DNA + H(+). Involved in base excision repair of DNA damaged by oxidation or by mutagenic agents. Acts as a DNA glycosylase that recognizes and removes damaged bases. Has a preference for oxidized purines, such as 7,8-dihydro-8-oxoguanine (8-oxoG). Has AP (apurinic/apyrimidinic) lyase activity and introduces nicks in the DNA strand. Cleaves the DNA backbone by beta-delta elimination to generate a single-strand break at the site of the removed base with both 3'- and 5'-phosphates. This is Formamidopyrimidine-DNA glycosylase from Prochlorococcus marinus (strain MIT 9211).